Here is a 199-residue protein sequence, read N- to C-terminus: NADH-quinone oxidoreductase subunit C (199 aa).

It belongs to the complex I 30 kDa subunit family. NDH-1 is composed of 14 different subunits. Subunits NuoB, C, D, E, F, and G constitute the peripheral sector of the complex.

It is found in the cell inner membrane. It catalyses the reaction a quinone + NADH + 5 H(+)(in) = a quinol + NAD(+) + 4 H(+)(out). In terms of biological role, NDH-1 shuttles electrons from NADH, via FMN and iron-sulfur (Fe-S) centers, to quinones in the respiratory chain. The immediate electron acceptor for the enzyme in this species is believed to be ubiquinone. Couples the redox reaction to proton translocation (for every two electrons transferred, four hydrogen ions are translocated across the cytoplasmic membrane), and thus conserves the redox energy in a proton gradient. In Cupriavidus taiwanensis (strain DSM 17343 / BCRC 17206 / CCUG 44338 / CIP 107171 / LMG 19424 / R1) (Ralstonia taiwanensis (strain LMG 19424)), this protein is NADH-quinone oxidoreductase subunit C.